The primary structure comprises 229 residues: Ribonuclease 3 (229 aa).

Positions leucine 5–glycine 136 constitute an RNase III domain. Glutamate 49 lines the Mg(2+) pocket. Aspartate 53 is a catalytic residue. 2 residues coordinate Mg(2+): aspartate 122 and glutamate 125. Glutamate 125 is an active-site residue. The DRBM domain occupies aspartate 161–arginine 229.

Belongs to the ribonuclease III family. In terms of assembly, homodimer. Mg(2+) serves as cofactor.

Its subcellular location is the cytoplasm. It carries out the reaction Endonucleolytic cleavage to 5'-phosphomonoester.. Digests double-stranded RNA. Involved in the processing of primary rRNA transcript to yield the immediate precursors to the large and small rRNAs (23S and 16S). Processes some mRNAs, and tRNAs when they are encoded in the rRNA operon. Processes pre-crRNA and tracrRNA of type II CRISPR loci if present in the organism. The chain is Ribonuclease 3 from Chloroflexus aggregans (strain MD-66 / DSM 9485).